A 227-amino-acid polypeptide reads, in one-letter code: Phosphatidylserine decarboxylase proenzyme (227 aa).

S184 serves as the catalytic Schiff-base intermediate with substrate; via pyruvic acid. The residue at position 184 (S184) is a Pyruvic acid (Ser); by autocatalysis.

Belongs to the phosphatidylserine decarboxylase family. PSD-A subfamily. In terms of assembly, heterodimer of a large membrane-associated beta subunit and a small pyruvoyl-containing alpha subunit. Pyruvate is required as a cofactor. Is synthesized initially as an inactive proenzyme. Formation of the active enzyme involves a self-maturation process in which the active site pyruvoyl group is generated from an internal serine residue via an autocatalytic post-translational modification. Two non-identical subunits are generated from the proenzyme in this reaction, and the pyruvate is formed at the N-terminus of the alpha chain, which is derived from the carboxyl end of the proenzyme. The post-translation cleavage follows an unusual pathway, termed non-hydrolytic serinolysis, in which the side chain hydroxyl group of the serine supplies its oxygen atom to form the C-terminus of the beta chain, while the remainder of the serine residue undergoes an oxidative deamination to produce ammonia and the pyruvoyl prosthetic group on the alpha chain.

The protein localises to the cell membrane. It catalyses the reaction a 1,2-diacyl-sn-glycero-3-phospho-L-serine + H(+) = a 1,2-diacyl-sn-glycero-3-phosphoethanolamine + CO2. Its pathway is phospholipid metabolism; phosphatidylethanolamine biosynthesis; phosphatidylethanolamine from CDP-diacylglycerol: step 2/2. In terms of biological role, catalyzes the formation of phosphatidylethanolamine (PtdEtn) from phosphatidylserine (PtdSer). This is Phosphatidylserine decarboxylase proenzyme from Ehrlichia ruminantium (strain Welgevonden).